Consider the following 403-residue polypeptide: Phosphopentomutase (403 aa).

Aspartate 13, aspartate 298, histidine 303, aspartate 339, histidine 340, and histidine 351 together coordinate Mn(2+).

Belongs to the phosphopentomutase family. Mn(2+) is required as a cofactor.

The protein localises to the cytoplasm. It carries out the reaction 2-deoxy-alpha-D-ribose 1-phosphate = 2-deoxy-D-ribose 5-phosphate. The catalysed reaction is alpha-D-ribose 1-phosphate = D-ribose 5-phosphate. Its pathway is carbohydrate degradation; 2-deoxy-D-ribose 1-phosphate degradation; D-glyceraldehyde 3-phosphate and acetaldehyde from 2-deoxy-alpha-D-ribose 1-phosphate: step 1/2. Its function is as follows. Isomerase that catalyzes the conversion of deoxy-ribose 1-phosphate (dRib-1-P) and ribose 1-phosphate (Rib-1-P) to deoxy-ribose 5-phosphate (dRib-5-P) and ribose 5-phosphate (Rib-5-P), respectively. This Streptococcus thermophilus (strain ATCC BAA-491 / LMD-9) protein is Phosphopentomutase.